A 337-amino-acid chain; its full sequence is Lipoyl synthase (337 aa).

Residues C81, C86, C92, C107, C111, C114, and S323 each coordinate [4Fe-4S] cluster. The Radical SAM core domain occupies 93–312 (FSHGTATFMI…EEYGNALGFS (220 aa)).

It belongs to the radical SAM superfamily. Lipoyl synthase family. The cofactor is [4Fe-4S] cluster.

Its subcellular location is the cytoplasm. The catalysed reaction is [[Fe-S] cluster scaffold protein carrying a second [4Fe-4S](2+) cluster] + N(6)-octanoyl-L-lysyl-[protein] + 2 oxidized [2Fe-2S]-[ferredoxin] + 2 S-adenosyl-L-methionine + 4 H(+) = [[Fe-S] cluster scaffold protein] + N(6)-[(R)-dihydrolipoyl]-L-lysyl-[protein] + 4 Fe(3+) + 2 hydrogen sulfide + 2 5'-deoxyadenosine + 2 L-methionine + 2 reduced [2Fe-2S]-[ferredoxin]. Its pathway is protein modification; protein lipoylation via endogenous pathway; protein N(6)-(lipoyl)lysine from octanoyl-[acyl-carrier-protein]: step 2/2. In terms of biological role, catalyzes the radical-mediated insertion of two sulfur atoms into the C-6 and C-8 positions of the octanoyl moiety bound to the lipoyl domains of lipoate-dependent enzymes, thereby converting the octanoylated domains into lipoylated derivatives. This Xanthomonas campestris pv. campestris (strain 8004) protein is Lipoyl synthase.